Reading from the N-terminus, the 487-residue chain is UDP-N-acetylmuramate--L-alanine ligase (487 aa).

126 to 132 (GTHGKTT) provides a ligand contact to ATP.

Belongs to the MurCDEF family.

The protein localises to the cytoplasm. It catalyses the reaction UDP-N-acetyl-alpha-D-muramate + L-alanine + ATP = UDP-N-acetyl-alpha-D-muramoyl-L-alanine + ADP + phosphate + H(+). It functions in the pathway cell wall biogenesis; peptidoglycan biosynthesis. Cell wall formation. The chain is UDP-N-acetylmuramate--L-alanine ligase from Proteus mirabilis (strain HI4320).